Here is a 223-residue protein sequence, read N- to C-terminus: Small ribosomal subunit protein uS3 (223 aa).

Residues 39-108 (IRNFVKKNSY…NILINIVEVK (70 aa)) enclose the KH type-2 domain.

Belongs to the universal ribosomal protein uS3 family. Part of the 30S ribosomal subunit. Forms a tight complex with proteins S10 and S14.

Binds the lower part of the 30S subunit head. Binds mRNA in the 70S ribosome, positioning it for translation. This Clostridium botulinum (strain Okra / Type B1) protein is Small ribosomal subunit protein uS3.